Consider the following 398-residue polypeptide: CCA-adding enzyme (398 aa).

ATP contacts are provided by glycine 32 and arginine 35. CTP is bound by residues glycine 32 and arginine 35. Mg(2+) contacts are provided by aspartate 45 and aspartate 47. The ATP site is built by arginine 116, aspartate 159, arginine 162, arginine 165, and arginine 168. Residues arginine 116, aspartate 159, arginine 162, arginine 165, and arginine 168 each coordinate CTP.

It belongs to the tRNA nucleotidyltransferase/poly(A) polymerase family. Bacterial CCA-adding enzyme type 3 subfamily. In terms of assembly, homodimer. Requires Mg(2+) as cofactor.

The enzyme catalyses a tRNA precursor + 2 CTP + ATP = a tRNA with a 3' CCA end + 3 diphosphate. The catalysed reaction is a tRNA with a 3' CCA end + 2 CTP + ATP = a tRNA with a 3' CCACCA end + 3 diphosphate. Its function is as follows. Catalyzes the addition and repair of the essential 3'-terminal CCA sequence in tRNAs without using a nucleic acid template. Adds these three nucleotides in the order of C, C, and A to the tRNA nucleotide-73, using CTP and ATP as substrates and producing inorganic pyrophosphate. tRNA 3'-terminal CCA addition is required both for tRNA processing and repair. Also involved in tRNA surveillance by mediating tandem CCA addition to generate a CCACCA at the 3' terminus of unstable tRNAs. While stable tRNAs receive only 3'-terminal CCA, unstable tRNAs are marked with CCACCA and rapidly degraded. The polypeptide is CCA-adding enzyme (Lactobacillus johnsonii (strain CNCM I-12250 / La1 / NCC 533)).